The primary structure comprises 394 residues: Phosphopentomutase (394 aa).

Positions 14, 287, 292, 328, 329, and 340 each coordinate Mn(2+).

This sequence belongs to the phosphopentomutase family. Mn(2+) is required as a cofactor.

It is found in the cytoplasm. The catalysed reaction is 2-deoxy-alpha-D-ribose 1-phosphate = 2-deoxy-D-ribose 5-phosphate. It catalyses the reaction alpha-D-ribose 1-phosphate = D-ribose 5-phosphate. The protein operates within carbohydrate degradation; 2-deoxy-D-ribose 1-phosphate degradation; D-glyceraldehyde 3-phosphate and acetaldehyde from 2-deoxy-alpha-D-ribose 1-phosphate: step 1/2. Its function is as follows. Isomerase that catalyzes the conversion of deoxy-ribose 1-phosphate (dRib-1-P) and ribose 1-phosphate (Rib-1-P) to deoxy-ribose 5-phosphate (dRib-5-P) and ribose 5-phosphate (Rib-5-P), respectively. The polypeptide is Phosphopentomutase (Listeria welshimeri serovar 6b (strain ATCC 35897 / DSM 20650 / CCUG 15529 / CIP 8149 / NCTC 11857 / SLCC 5334 / V8)).